A 143-amino-acid chain; its full sequence is D-aminoacyl-tRNA deacylase (143 aa).

Residues 135–136 carry the Gly-cisPro motif, important for rejection of L-amino acids motif; sequence GP.

It belongs to the DTD family. Homodimer.

Its subcellular location is the cytoplasm. The enzyme catalyses glycyl-tRNA(Ala) + H2O = tRNA(Ala) + glycine + H(+). The catalysed reaction is a D-aminoacyl-tRNA + H2O = a tRNA + a D-alpha-amino acid + H(+). Its function is as follows. An aminoacyl-tRNA editing enzyme that deacylates mischarged D-aminoacyl-tRNAs. Also deacylates mischarged glycyl-tRNA(Ala), protecting cells against glycine mischarging by AlaRS. Acts via tRNA-based rather than protein-based catalysis; rejects L-amino acids rather than detecting D-amino acids in the active site. By recycling D-aminoacyl-tRNA to D-amino acids and free tRNA molecules, this enzyme counteracts the toxicity associated with the formation of D-aminoacyl-tRNA entities in vivo and helps enforce protein L-homochirality. This Mycolicibacterium paratuberculosis (strain ATCC BAA-968 / K-10) (Mycobacterium paratuberculosis) protein is D-aminoacyl-tRNA deacylase.